We begin with the raw amino-acid sequence, 674 residues long: Electrogenic aspartate/glutamate antiporter SLC25A13, mitochondrial (674 aa).

Position 2 is an N-acetylalanine (alanine 2). The segment at 2 to 295 (AAAKVALTKR…TLADIERIAP (294 aa)) is regulatory N-terminal domain. Residues 2–331 (AAAKVALTKR…LLQVAESAYR (330 aa)) lie on the Mitochondrial intermembrane side of the membrane. EF-hand domains lie at 51 to 86 (SQPNPKTVELLSGVADQTKDGLISFQEFVAFESVLC), 87 to 122 (APDALFMVAFQLFDKAGKGEVTFEDVKQVFGQTTIH), 123 to 157 (QHIPFNWDSEFVQLHFGKERKRHLTYAEFTQFLLE), and 158 to 193 (IQLEHAKQAFVQRDNASTGRVTAIDFRDIMVTIRPH). 5 residues coordinate Ca(2+): aspartate 66, threonine 68, aspartate 70, leucine 72, and glutamate 77. The segment at 296–311 (LEEGTLPFNLAEAQRQ) is linker loop domain. The tract at residues 321-611 (VLLQVAESAY…LQRWFYIDFG (291 aa)) is carrier domain. Solcar repeat units follow at residues 326–418 (AESA…VRDK), 426–510 (VPLA…ARAS), and 518–605 (VSPG…LQRW). Residues 332-349 (FGLGSVAGAVGATAVYPI) form a helical membrane-spanning segment. Residues 350–392 (DLVKTRMQNQRSTGSFVGELMYKNSFDCFKKVLRYEGFFGLYR) are Mitochondrial matrix-facing. Lysine 353 and lysine 372 each carry N6-acetyllysine. A helical membrane pass occupies residues 393–412 (GLLPQLLGVAPEKAIKLTVN). The Mitochondrial intermembrane segment spans residues 413-435 (DFVRDKFMHKDGSVPLAAEILAG). A helical transmembrane segment spans residues 436-449 (GCAGGSQVIFTNPL). The Mitochondrial matrix portion of the chain corresponds to 450-484 (EIVKIRLQVAGEITTGPRVSALSVVRDLGFFGIYK). Lysine 453 carries the N6-methyllysine modification. Lysine 484 is modified (N6-acetyllysine; alternate). N6-succinyllysine; alternate is present on lysine 484. A helical membrane pass occupies residues 485-504 (GAKACFLRDIPFSAIYFPCY). The Mitochondrial intermembrane portion of the chain corresponds to 505-523 (AHARASFANEDGQVSPGSL). Residues 524-541 (LLAGAIAGMPAASLVTPA) form a helical membrane-spanning segment. Over 542 to 580 (DVIKTRLQVAARAGQTTYSGVIDCFKKILREEGPKALWK) the chain is Mitochondrial matrix. N6-succinyllysine is present on lysine 580. The helical transmembrane segment at 581 to 599 (GAARVFRSSPQFGVTLLTY) threads the bilayer. Over 600 to 674 (ELLQRWFYID…PTSEAIGGGP (75 aa)) the chain is Mitochondrial intermembrane. The C-terminal domain stretch occupies residues 612-674 (GVKPMGSEPV…PTSEAIGGGP (63 aa)). Lysine 661 carries the N6-acetyllysine modification.

Belongs to the mitochondrial carrier (TC 2.A.29) family. Homodimer (via N-terminus).

It localises to the mitochondrion inner membrane. It carries out the reaction L-aspartate(in) + L-glutamate(out) + H(+)(out) = L-aspartate(out) + L-glutamate(in) + H(+)(in). The catalysed reaction is 3-sulfino-L-alanine(out) + L-glutamate(in) + H(+)(in) = 3-sulfino-L-alanine(in) + L-glutamate(out) + H(+)(out). The enzyme catalyses 3-sulfino-L-alanine(out) + L-aspartate(in) = 3-sulfino-L-alanine(in) + L-aspartate(out). In terms of biological role, mitochondrial electrogenic aspartate/glutamate antiporter that favors efflux of aspartate and entry of glutamate and proton within the mitochondria as part of the malate-aspartate shuttle. Also mediates the uptake of L-cysteinesulfinate (3-sulfino-L-alanine) by mitochondria in exchange of L-glutamate and proton. Can also exchange L-cysteinesulfinate with aspartate in their anionic form without any proton translocation. Lacks transport activity towards gamma-aminobutyric acid (GABA). This Macaca fascicularis (Crab-eating macaque) protein is Electrogenic aspartate/glutamate antiporter SLC25A13, mitochondrial.